The primary structure comprises 324 residues: D-alanine--D-alanine ligase (324 aa).

Residues 121–321 enclose the ATP-grasp domain; that stretch reads NQYLKGFGIR…IKDVMTDIIE (201 aa). 149-204 provides a ligand contact to ATP; the sequence is INKIGLPCFIKPNAGGSSFGVTKVKTKEDIQPAIEKAFEESDEVMIEAFMKGTEIT. Mg(2+)-binding residues include Asp-275, Glu-288, and Asn-290.

Belongs to the D-alanine--D-alanine ligase family. Requires Mg(2+) as cofactor. It depends on Mn(2+) as a cofactor.

The protein localises to the cytoplasm. It carries out the reaction 2 D-alanine + ATP = D-alanyl-D-alanine + ADP + phosphate + H(+). The protein operates within cell wall biogenesis; peptidoglycan biosynthesis. Its function is as follows. Cell wall formation. This Phocaeicola vulgatus (strain ATCC 8482 / DSM 1447 / JCM 5826 / CCUG 4940 / NBRC 14291 / NCTC 11154) (Bacteroides vulgatus) protein is D-alanine--D-alanine ligase.